The chain runs to 121 residues: Small ribosomal subunit protein uS13 (121 aa).

The tract at residues 93–121 (RGLPMRGQRTRTNARTRKGPRKGAAALKK) is disordered.

This sequence belongs to the universal ribosomal protein uS13 family. As to quaternary structure, part of the 30S ribosomal subunit. Forms a loose heterodimer with protein S19. Forms two bridges to the 50S subunit in the 70S ribosome.

In terms of biological role, located at the top of the head of the 30S subunit, it contacts several helices of the 16S rRNA. In the 70S ribosome it contacts the 23S rRNA (bridge B1a) and protein L5 of the 50S subunit (bridge B1b), connecting the 2 subunits; these bridges are implicated in subunit movement. Contacts the tRNAs in the A and P-sites. The sequence is that of Small ribosomal subunit protein uS13 from Acidovorax ebreus (strain TPSY) (Diaphorobacter sp. (strain TPSY)).